The chain runs to 179 residues: Large ribosomal subunit protein uL5 (179 aa).

This sequence belongs to the universal ribosomal protein uL5 family. In terms of assembly, part of the 50S ribosomal subunit; part of the 5S rRNA/L5/L18/L25 subcomplex. Contacts the 5S rRNA and the P site tRNA. Forms a bridge to the 30S subunit in the 70S ribosome.

This is one of the proteins that bind and probably mediate the attachment of the 5S RNA into the large ribosomal subunit, where it forms part of the central protuberance. In the 70S ribosome it contacts protein S13 of the 30S subunit (bridge B1b), connecting the 2 subunits; this bridge is implicated in subunit movement. Contacts the P site tRNA; the 5S rRNA and some of its associated proteins might help stabilize positioning of ribosome-bound tRNAs. The sequence is that of Large ribosomal subunit protein uL5 from Shewanella sp. (strain ANA-3).